We begin with the raw amino-acid sequence, 204 residues long: Large ribosomal subunit protein eL15 (204 aa).

This sequence belongs to the eukaryotic ribosomal protein eL15 family. As to quaternary structure, component of the large ribosomal subunit.

The protein resides in the cytoplasm. In terms of biological role, component of the large ribosomal subunit. The ribosome is a large ribonucleoprotein complex responsible for the synthesis of proteins in the cell. The protein is Large ribosomal subunit protein eL15 (rpl15) of Megalobrama amblycephala (Chinese blunt snout bream).